The chain runs to 149 residues: Large ribosomal subunit protein bL9 (149 aa).

The protein belongs to the bacterial ribosomal protein bL9 family.

Its function is as follows. Binds to the 23S rRNA. This chain is Large ribosomal subunit protein bL9, found in Leptospira interrogans serogroup Icterohaemorrhagiae serovar copenhageni (strain Fiocruz L1-130).